The chain runs to 283 residues: 5'-nucleotidase SurE (283 aa).

A divalent metal cation is bound by residues D14, D15, S47, and N105.

It belongs to the SurE nucleotidase family. The cofactor is a divalent metal cation.

The protein resides in the cytoplasm. It carries out the reaction a ribonucleoside 5'-phosphate + H2O = a ribonucleoside + phosphate. Nucleotidase that shows phosphatase activity on nucleoside 5'-monophosphates. This Chlamydia muridarum (strain MoPn / Nigg) protein is 5'-nucleotidase SurE.